Consider the following 256-residue polypeptide: SPX domain-containing protein 1 (256 aa).

Residues 1–155 enclose the SPX domain; the sequence is MKFGKSLSNQ…GDLMRLPFIQ (155 aa). The Bipartite nuclear localization signal motif lies at 30-46; it reads KRLKLIGSKTADRPVKR.

Interacts with PHR1 in a highly Pi-dependent manner.

The protein localises to the nucleus. Functionally, plays a positive role in plant adaptation to phosphate starvation. Inhibits PHR1 DNA-binding activity in a Pi-dependent manner. The chain is SPX domain-containing protein 1 from Arabidopsis thaliana (Mouse-ear cress).